Here is a 288-residue protein sequence, read N- to C-terminus: Homoserine kinase (288 aa).

79-89 (PLARGLGSSSS) contacts ATP.

It belongs to the GHMP kinase family. Homoserine kinase subfamily.

Its subcellular location is the cytoplasm. It carries out the reaction L-homoserine + ATP = O-phospho-L-homoserine + ADP + H(+). It functions in the pathway amino-acid biosynthesis; L-threonine biosynthesis; L-threonine from L-aspartate: step 4/5. Functionally, catalyzes the ATP-dependent phosphorylation of L-homoserine to L-homoserine phosphate. This Streptococcus gordonii (strain Challis / ATCC 35105 / BCRC 15272 / CH1 / DL1 / V288) protein is Homoserine kinase.